Reading from the N-terminus, the 424-residue chain is Glutamyl-tRNA reductase (424 aa).

Substrate is bound by residues 50–53 (TCNR), S98, 103–105 (EDQ), and Q109. The active-site Nucleophile is C51. 178–183 (GSGEMG) is a binding site for NADP(+).

This sequence belongs to the glutamyl-tRNA reductase family. In terms of assembly, homodimer.

It catalyses the reaction (S)-4-amino-5-oxopentanoate + tRNA(Glu) + NADP(+) = L-glutamyl-tRNA(Glu) + NADPH + H(+). It functions in the pathway porphyrin-containing compound metabolism; protoporphyrin-IX biosynthesis; 5-aminolevulinate from L-glutamyl-tRNA(Glu): step 1/2. Catalyzes the NADPH-dependent reduction of glutamyl-tRNA(Glu) to glutamate 1-semialdehyde (GSA). The polypeptide is Glutamyl-tRNA reductase (Methanoregula boonei (strain DSM 21154 / JCM 14090 / 6A8)).